The chain runs to 315 residues: MRAAAGGARAAVLALLLGALHGAPARGEEYDYYGWQTEPLHGRSYSKPPQCLDIPADLPLCHTVGYKRMRLPNLLEHESLAEVKQQASSWLPLLAKRCHSDTQVFLCSLFAPVCLDRPIYPCRSLCEAVRAGCAPLMEAYGFPWPEMLHCHKFPLDNDLCIAVQFGHLPATAPPVTKICAQCEMEHSADGLMEQMCSSDFVVKMRIKEIKIENGDRKLIGAQKKKKLLKSGPLKRKDTKRLVLHMKNSAGCPCPQLDSLAGSFLVMGRKVDGQLLLMAVYRWDKKNKEMKFAVKFMFSYPCSLYYPFFYGAAEPH.

The signal sequence occupies residues 1–27 (MRAAAGGARAAVLALLLGALHGAPARG). In terms of domain architecture, FZ spans 46–163 (SKPPQCLDIP…PLDNDLCIAV (118 aa)). Disulfide bonds link Cys-51–Cys-114, Cys-61–Cys-107, Cys-98–Cys-133, Cys-122–Cys-160, Cys-126–Cys-150, Cys-179–Cys-251, Cys-182–Cys-253, and Cys-196–Cys-301. The region spanning 179 to 301 (CAQCEMEHSA…AVKFMFSYPC (123 aa)) is the NTR domain.

The protein belongs to the secreted frizzled-related protein (sFRP) family. In terms of tissue distribution, strongly expressed in the retinal pigment epithelium (RPE). Weak expression in retina, brain, heart, liver, kidney, testis and muscle.

It localises to the secreted. Its function is as follows. Soluble frizzled-related proteins (sFRPS) function as modulators of Wnt signaling through direct interaction with Wnts. They have a role in regulating cell growth and differentiation in specific cell types. SFRP5 may be involved in determining the polarity of photoreceptor, and perhaps other, cells in the retina. Inhibits Wnt8 signaling, in vitro. The sequence is that of Secreted frizzled-related protein 5 (SFRP5) from Bos taurus (Bovine).